The chain runs to 1041 residues: Collagen alpha-2(I) chain (1041 aa).

The tract at residues 1–1041 is disordered; sequence SGGFDFSFLP…FGYEGDFYRA (1041 aa). 4-hydroxyproline is present on residues Pro10, Pro13, Pro39, and Pro45. 2 stretches are compositionally biased toward low complexity: residues 25–45 and 55–76; these read LGPGPMGLMGPRGPPGASGAP and EPGEPGQTGPAGARGPAGPPGK. Over residues 77–91 the composition is skewed to basic and acidic residues; the sequence is AGEDGHPGKPGRPGE. At Lys113 the chain carries 5-hydroxylysine; alternate. O-linked (Gal...) hydroxylysine; alternate glycosylation is present at Lys113. Low complexity-rich tracts occupy residues 174-189 and 235-256; these read SVGPVGPAGPIGSAGP and PGANGLTGAKGAAGLPGVAGAP. Residues 290-299 show a composition bias toward gly residues; sequence GESGGKGEPG. Residues 300–310 are compositionally biased toward low complexity; it reads SAGPQGPPGSS. The span at 332-341 shows a compositional bias: gly residues; sequence GLRGGPGSRG. The span at 354 to 370 shows a compositional bias: low complexity; the sequence is PAGARGASGPAGVRGPS. 4-hydroxyproline is present on residues Pro376 and Pro379. The span at 405-424 shows a compositional bias: low complexity; it reads LPGIDGRPGPIGPAGARGEA. Residues 466-475 show a composition bias toward gly residues; the sequence is GVQGGKGEQG. Low complexity-rich tracts occupy residues 522–539 and 551–561; these read SGESGAVGPSGAIGSRGP and EPGVVGAPGTA. Positions 562-571 are enriched in gly residues; it reads GPAGSGGLPG. Composition is skewed to low complexity over residues 594–638 and 645–665; these read VGTT…PRGS and VGPAGPNGFAGPAGAAGQPGA. The span at 666–675 shows a compositional bias: basic and acidic residues; that stretch reads KGERGTKGPK. Over residues 683–693 the composition is skewed to low complexity; sequence PTGPVGSAGPA. Residues 703–712 are compositionally biased toward gly residues; sequence GSRGDGGPPG. A compositionally biased stretch (low complexity) spans 714-723; the sequence is TGFPGAAGRT. Residues 754-768 show a composition bias toward gly residues; sequence GPVGRGETGAGGPPG. 2 stretches are compositionally biased toward low complexity: residues 769–803 and 811–821; these read FTGEKGPSGEPGTAGPPGTAGPQGLLGAPGILGLP and LPGVAGAVGEP. Gly residues predominate over residues 822–840; that stretch reads GPLGIGPPGARGPSGGVPG. 2 stretches are compositionally biased toward low complexity: residues 874-887 and 903-918; these read YAGNPGPVGAAGAP and EPGPVGSAGPVGALGP. The span at 928–939 shows a compositional bias: basic and acidic residues; sequence RGDKGEAGDKGP. Over residues 1013–1023 the composition is skewed to pro residues; it reads PAGPPGPPGPP.

Belongs to the fibrillar collagen family. In terms of assembly, trimers of one alpha 2(I) and two alpha 1(I) chains. Interacts (via C-terminus) with TMEM131 (via PapD-L domain); the interaction is direct and is involved in assembly and TRAPPIII ER-to-Golgi transport complex-dependent secretion of collagen. Prolines at the third position of the tripeptide repeating unit (G-X-Y) are hydroxylated in some or all of the chains. As to expression, expressed in bones.

It localises to the secreted. The protein resides in the extracellular space. It is found in the extracellular matrix. Its function is as follows. Type I collagen is a member of group I collagen (fibrillar forming collagen). The polypeptide is Collagen alpha-2(I) chain (Paramylodon harlani (Harlan's ground sloth)).